Reading from the N-terminus, the 721-residue chain is Methionine--tRNA ligase (721 aa).

The 'HIGH' region signature appears at 27–37 (PYANGQIHIGH). Zn(2+) is bound by residues Cys-158, Cys-161, Cys-171, and Cys-174. The 'KMSKS' region signature appears at 348 to 352 (KMSKS). Lys-351 is an ATP binding site. Residues 615 to 721 (DFAKIDLRIA…SGAKPGMRVK (107 aa)) enclose the tRNA-binding domain.

It belongs to the class-I aminoacyl-tRNA synthetase family. MetG type 1 subfamily. Homodimer. The cofactor is Zn(2+).

The protein localises to the cytoplasm. The catalysed reaction is tRNA(Met) + L-methionine + ATP = L-methionyl-tRNA(Met) + AMP + diphosphate. Is required not only for elongation of protein synthesis but also for the initiation of all mRNA translation through initiator tRNA(fMet) aminoacylation. In Burkholderia vietnamiensis (strain G4 / LMG 22486) (Burkholderia cepacia (strain R1808)), this protein is Methionine--tRNA ligase.